A 295-amino-acid polypeptide reads, in one-letter code: UDP-N-acetylenolpyruvoylglucosamine reductase (295 aa).

One can recognise an FAD-binding PCMH-type domain in the interval 23 to 188 (KVGGPADFLA…ISAKFALKPG (166 aa)). Residue R167 is part of the active site. The active-site Proton donor is S217. Residue E287 is part of the active site.

The protein belongs to the MurB family. It depends on FAD as a cofactor.

The protein localises to the cytoplasm. It catalyses the reaction UDP-N-acetyl-alpha-D-muramate + NADP(+) = UDP-N-acetyl-3-O-(1-carboxyvinyl)-alpha-D-glucosamine + NADPH + H(+). It functions in the pathway cell wall biogenesis; peptidoglycan biosynthesis. Its function is as follows. Cell wall formation. This chain is UDP-N-acetylenolpyruvoylglucosamine reductase, found in Streptococcus pyogenes serotype M18 (strain MGAS8232).